We begin with the raw amino-acid sequence, 231 residues long: Beta-casein (231 aa).

A signal peptide spans 1–15 (MKVFILACLVALALA). Phosphoserine is present on S24. Position 27 is a phosphothreonine (T27). A phosphoserine mark is found at S29, S31, and S32.

It belongs to the beta-casein family. Mammary gland specific. Secreted in milk.

The protein localises to the secreted. Functionally, important role in determination of the surface properties of the casein micelles. The protein is Beta-casein (Csn2) of Rattus norvegicus (Rat).